The sequence spans 236 residues: Protein-S-isoprenylcysteine O-methyltransferase (236 aa).

4 helical membrane passes run 3-23, 24-44, 76-96, and 108-128; these read NLHT…LGCV, FGLG…FFAF, AYWL…GKSF, and FLIN…LCLG. S-adenosyl-L-methionine contacts are provided by residues 155 to 158, Y163, and 168 to 171; these read HLLV and HPSY. A helical membrane pass occupies residues 174 to 194; the sequence is FFIWALGTQMLLGNFVSTLLF. Residue R205 participates in substrate binding. S-adenosyl-L-methionine is bound at residue E209.

It belongs to the class VI-like SAM-binding methyltransferase superfamily. Isoprenylcysteine carboxyl methyltransferase family.

The protein resides in the membrane. It carries out the reaction [protein]-C-terminal S-[(2E,6E)-farnesyl]-L-cysteine + S-adenosyl-L-methionine = [protein]-C-terminal S-[(2E,6E)-farnesyl]-L-cysteine methyl ester + S-adenosyl-L-homocysteine. Its function is as follows. Mediates C-terminal methylation of the isoprenylated C-terminal cysteine in M-factor. The protein is Protein-S-isoprenylcysteine O-methyltransferase (mam4) of Schizosaccharomyces pombe (strain 972 / ATCC 24843) (Fission yeast).